Consider the following 1578-residue polypeptide: Formin-2 (1578 aa).

Composition is skewed to basic and acidic residues over residues 1–17 (MGNQ…DASH), 26–35 (AGPRDAEITK), and 57–66 (TSKKKSKSDS). Residues 1-73 (MGNQDGKLKR…SDSRASVFSN (73 aa)) are disordered. Ser89 carries the phosphoserine modification. Disordered regions lie at residues 208-230 (KLLL…QPGA), 244-383 (EAEK…PSPR), and 401-458 (RQLS…GLSR). 2 stretches are compositionally biased toward polar residues: residues 273 to 282 (SSGSHLTSET) and 290 to 300 (SAVTDSLSSPA). The segment covering 322–333 (DTDEECEEDAFE) has biased composition (acidic residues). A compositionally biased stretch (basic and acidic residues) spans 351 to 364 (ASQRLEKEPEEGMR). Composition is skewed to low complexity over residues 404–418 (SSPN…NQSP) and 427–442 (SVSR…AAAP). A phosphoserine mark is found at Ser459, Ser489, and Ser493. The disordered stretch occupies residues 587 to 634 (SMDYSEGQFPRREPSMWPSSKLPEEEPSPKDVDTEPKSSILESPKKCS). The span at 608–622 (LPEEEPSPKDVDTEP) shows a compositional bias: basic and acidic residues. A coiled-coil region spans residues 643-683 (DVKSEGQATVIQQLEQTIEDLRTKIAELEKQYPALDLEGPR). Disordered regions lie at residues 714–765 (RTLE…SGPQ), 786–836 (DAQQ…GNNC), and 880–944 (PALQ…MGIS). The 390-residue stretch at 735–1124 (PPPKAPPEGL…GCGFLFPPLP (390 aa)) folds into the FH1 domain. The segment covering 786–795 (DAQQIQSASQ) has biased composition (polar residues). A compositionally biased stretch (low complexity) spans 803–817 (LGSDSQGQPSQPSLH). Basic and acidic residues predominate over residues 818–827 (TESETSHEHS). The span at 893-944 (LPAPPQPPPLPGLGVPPPPPAPPLPGMGIPPPPPLPGMGIPPPPPLPGMGIS) shows a compositional bias: pro residues. Repeat copies occupy residues 919–929 (MGIPPPPPLPG), 930–940 (MGIPPPPPLPG), 941–951 (MGISPLPPLPG), 952–962 (MGIPPPPPLPG), 963–973 (VGIPPPPPLPG), 974–984 (VGIPPPPPLPG), 985–995 (VGIPPPPPLPG), 996–1006 (VGIPPPPPLPG), 1007–1017 (VGIPPPPPLPG), 1018–1028 (VGIPPPPPLPG), 1029–1039 (VGIPPPPPLPG), and 1040–1050 (VGIPPPPPLPG). Residues 919–1039 (MGIPPPPPLP…GIPPPPPLPG (121 aa)) form a 12 X 11 AA tandem repeats of [MV]-G-I-P-P-P-P-P-L-P-G region. The segment covering 1037–1097 (LPGVGIPPPP…PPPPLLPGSG (61 aa)) has biased composition (pro residues). The interval 1037–1108 (LPGVGIPPPP…PHSSQVGSST (72 aa)) is disordered. The FH2 domain maps to 1139 to 1554 (RKQLIEPCRP…KEAEEVCRQK (416 aa)). Positions 1419–1455 (QELFQASQMKFEDFQKDLRKLKKDLKACEAEAGKVYQ) form a coiled coil. An important for interaction with SPIRE1 region spans residues 1571 to 1578 (KAKISMKT).

It belongs to the formin homology family. Cappuccino subfamily. In terms of assembly, interacts with SPIRE1. Binds actin. Interacts with CDKN1A. As to expression, detected in brain and in oocytes (at protein level). Expressed almost exclusively in the developing and mature central nervous system. Detected in oocytes.

It is found in the cytoplasm. It localises to the cytoskeleton. The protein localises to the cytosol. The protein resides in the perinuclear region. Its subcellular location is the nucleus. It is found in the nucleolus. It localises to the cell membrane. The protein localises to the cell cortex. The protein resides in the cytoplasmic vesicle membrane. In terms of biological role, actin-binding protein that is involved in actin cytoskeleton assembly and reorganization. Acts as an actin nucleation factor and promotes assembly of actin filaments together with SPIRE1 and SPIRE2. Involved in intracellular vesicle transport along actin fibers, providing a novel link between actin cytoskeleton dynamics and intracellular transport. Required for asymmetric spindle positioning, asymmetric oocyte division and polar body extrusion during female germ cell meiosis. Plays a role in responses to DNA damage, cellular stress and hypoxia by protecting CDKN1A against degradation, and thereby plays a role in stress-induced cell cycle arrest. Also acts in the nucleus: together with SPIRE1 and SPIRE2, promotes assembly of nuclear actin filaments in response to DNA damage in order to facilitate movement of chromatin and repair factors after DNA damage. Protects cells against apoptosis by protecting CDKN1A against degradation. This is Formin-2 (Fmn2) from Mus musculus (Mouse).